Here is a 209-residue protein sequence, read N- to C-terminus: Chaperone protein TorD (209 aa).

The protein belongs to the TorD/DmsD family. TorD subfamily.

The protein resides in the cytoplasm. Functionally, involved in the biogenesis of TorA. Acts on TorA before the insertion of the molybdenum cofactor and, as a result, probably favors a conformation of the apoenzyme that is competent for acquiring the cofactor. This is Chaperone protein TorD from Shewanella sp. (strain MR-4).